A 382-amino-acid polypeptide reads, in one-letter code: uncharacterized protein (382 aa).

The N-terminal stretch at 1–25 is a signal peptide; sequence MKKWMAAVFVMMLMLCFGGIENVKA. The active-site Nucleophile is the Ser186. Catalysis depends on residues Asp354 and His357.

This sequence belongs to the 'GDSL' lipolytic enzyme family.

This is an uncharacterized protein from Bacillus subtilis (strain 168).